Reading from the N-terminus, the 93-residue chain is UPF0728 protein C10orf53 (93 aa).

This sequence belongs to the UPF0728 family.

The sequence is that of UPF0728 protein C10orf53 (C10orf53) from Homo sapiens (Human).